Consider the following 208-residue polypeptide: Uracil phosphoribosyltransferase (208 aa).

5-phospho-alpha-D-ribose 1-diphosphate-binding positions include Arg77, Arg102, and 129–137 (DPMLATGNS). Uracil contacts are provided by residues Ile193 and 198-200 (GDA). Asp199 is a 5-phospho-alpha-D-ribose 1-diphosphate binding site.

It belongs to the UPRTase family. It depends on Mg(2+) as a cofactor.

The enzyme catalyses UMP + diphosphate = 5-phospho-alpha-D-ribose 1-diphosphate + uracil. It participates in pyrimidine metabolism; UMP biosynthesis via salvage pathway; UMP from uracil: step 1/1. Its activity is regulated as follows. Allosterically activated by GTP. In terms of biological role, catalyzes the conversion of uracil and 5-phospho-alpha-D-ribose 1-diphosphate (PRPP) to UMP and diphosphate. This Mycoplasmopsis agalactiae (strain NCTC 10123 / CIP 59.7 / PG2) (Mycoplasma agalactiae) protein is Uracil phosphoribosyltransferase.